Reading from the N-terminus, the 442-residue chain is MAAGTLYTYPENWRAFKAQIAAQYSGARLKIASASPAFTFGQTNRSPAFLSNFPLGKVPAYQGDDGFCLFESNAIAHFLSNDALRGSTPQASAQVLQWVSFADSEIIPPASAWVFPTLGIMQFNKQATEQAKEEVKRVLAVLNQHLNTRTFLVGERVSLADITVVCSLLWLYKQVLEPAFRQPYPNVTRWFLTCVNQPQFKAVLGEVKLCEKMAQFDAKKFAEMQPKKEAPAKKEKAGKEGGKQQQPQQEKKEKKKEEKKAAPAEEEMDECEAALASEPKAKDPYAHLPKSSFVMDEFKRKYSNEDTLTVALPYFWDHFDREGFSIWYAEYRFPEELTMSFMSCNLITGMFQRLDKLRKNAFASVILFGANNDSCISGIWVFRGQELAFTLSEDWQIDYESYTWRKLDVDSEECKTMVKEYFAWEGEFKHVGKSFNQGKIFK.

The GST N-terminal domain maps to 2–87; that stretch reads AAGTLYTYPE…FLSNDALRGS (86 aa). The GST C-terminal domain maps to 88–216; that stretch reads TPQASAQVLQ…VKLCEKMAQF (129 aa). Basic and acidic residues-rich tracts occupy residues 224–242 and 249–263; these read MQPKKEAPAKKEKAGKEGG and QEKKEKKKEEKKAAP. A disordered region spans residues 224–273; that stretch reads MQPKKEAPAKKEKAGKEGGKQQQPQQEKKEKKKEEKKAAPAEEEMDECEA. Positions 281 to 442 constitute an EF-1-gamma C-terminal domain; sequence AKDPYAHLPK…KSFNQGKIFK (162 aa).

As to quaternary structure, EF-1 is composed of four subunits: alpha, beta, delta, and gamma.

In terms of biological role, probably plays a role in anchoring the complex to other cellular components. This is Elongation factor 1-gamma (eef1g) from Carassius auratus (Goldfish).